A 417-amino-acid chain; its full sequence is Membrane protein UL43 (417 aa).

The segment at 1–21 (MLRNDSHRAVSPEDGQGRVDD) is disordered. 5 consecutive transmembrane segments (helical) span residues 57-77 (GPYA…LGFM), 90-110 (IYAW…SLGE), 119-139 (APGP…LLVL), 146-166 (LFLL…VGGL), and 175-195 (WWIG…GPGA). Residues 217–254 (AGESLSRRPPEDPERPGVPGPPSPPTPQRSHGPPADEV) form a disordered region. Residues 221-231 (LSRRPPEDPER) show a composition bias toward basic and acidic residues. The segment covering 232-243 (PGVPGPPSPPTP) has biased composition (pro residues). 5 helical membrane passes run 263–283 (ENVW…VKTV), 291–311 (PGPG…AVAL), 323–343 (LTDP…GLVF), 348–368 (VVVY…VLGL), and 389–409 (GLFF…CPPG).

This sequence belongs to the alphaherpesvirinae HHV-1 UL43 family.

It is found in the membrane. In Human herpesvirus 1 (strain 17) (HHV-1), this protein is Membrane protein UL43.